We begin with the raw amino-acid sequence, 456 residues long: Phosphomethylpyrimidine synthase (456 aa).

Residues Asn80, Met109, Tyr139, His175, 195-197 (SRG), 236-239 (DSLR), and Glu275 each bind substrate. Residue His279 participates in Zn(2+) binding. Tyr302 is a binding site for substrate. Zn(2+) is bound at residue His343. Positions 423, 426, and 431 each coordinate [4Fe-4S] cluster.

It belongs to the ThiC family. [4Fe-4S] cluster is required as a cofactor.

The enzyme catalyses 5-amino-1-(5-phospho-beta-D-ribosyl)imidazole + S-adenosyl-L-methionine = 4-amino-2-methyl-5-(phosphooxymethyl)pyrimidine + CO + 5'-deoxyadenosine + formate + L-methionine + 3 H(+). It participates in cofactor biosynthesis; thiamine diphosphate biosynthesis. Catalyzes the synthesis of the hydroxymethylpyrimidine phosphate (HMP-P) moiety of thiamine from aminoimidazole ribotide (AIR) in a radical S-adenosyl-L-methionine (SAM)-dependent reaction. In Prochlorococcus marinus subsp. pastoris (strain CCMP1986 / NIES-2087 / MED4), this protein is Phosphomethylpyrimidine synthase.